The primary structure comprises 116 residues: Large ribosomal subunit protein bL17 (116 aa).

It belongs to the bacterial ribosomal protein bL17 family. Part of the 50S ribosomal subunit. Contacts protein L32.

This chain is Large ribosomal subunit protein bL17, found in Synechococcus sp. (strain JA-2-3B'a(2-13)) (Cyanobacteria bacterium Yellowstone B-Prime).